A 61-amino-acid polypeptide reads, in one-letter code: Sperm protamine P1 (61 aa).

The tract at residues 1 to 61 (MARYRHSRSR…RYSRRRRRRY (61 aa)) is disordered.

This sequence belongs to the protamine P1 family. Testis.

The protein localises to the nucleus. It is found in the chromosome. In terms of biological role, protamines substitute for histones in the chromatin of sperm during the haploid phase of spermatogenesis. They compact sperm DNA into a highly condensed, stable and inactive complex. This Onychogalea fraenata (Bridled nail-tailed wallaby) protein is Sperm protamine P1 (PRM1).